Here is a 760-residue protein sequence, read N- to C-terminus: Polyribonucleotide nucleotidyltransferase (760 aa).

The Mg(2+) site is built by D492 and D498. In terms of domain architecture, KH spans 559–618 (PQHAEVFVNPDIIRIIIGPGGKNIKAITATTGASIDIEDSGRVSIFAPTLEAMEMAREMV). In terms of domain architecture, S1 motif spans 628 to 702 (GKNYTGKVRK…SRKAVLLEEQ (75 aa)). A disordered region spans residues 706 to 760 (WKPEDTARPSGPREGGRRDGGRDGRRDGGRDGRRDGGRDGGRRDGGRRDGGRDRN). A compositionally biased stretch (basic and acidic residues) spans 719 to 760 (EGGRRDGGRDGRRDGGRDGRRDGGRDGGRRDGGRRDGGRDRN).

The protein belongs to the polyribonucleotide nucleotidyltransferase family. It depends on Mg(2+) as a cofactor.

The protein resides in the cytoplasm. It carries out the reaction RNA(n+1) + phosphate = RNA(n) + a ribonucleoside 5'-diphosphate. Its function is as follows. Involved in mRNA degradation. Catalyzes the phosphorolysis of single-stranded polyribonucleotides processively in the 3'- to 5'-direction. This Nitratidesulfovibrio vulgaris (strain ATCC 29579 / DSM 644 / CCUG 34227 / NCIMB 8303 / VKM B-1760 / Hildenborough) (Desulfovibrio vulgaris) protein is Polyribonucleotide nucleotidyltransferase.